Reading from the N-terminus, the 315-residue chain is Probable cell division protein WhiA (315 aa).

Positions 278–312 (SLSDLAGMIEGQELTKSGINHRMRKLMQIVKELNH) form a DNA-binding region, H-T-H motif.

Belongs to the WhiA family.

Its function is as follows. Involved in cell division and chromosome segregation. This Oenococcus oeni (strain ATCC BAA-331 / PSU-1) protein is Probable cell division protein WhiA.